We begin with the raw amino-acid sequence, 347 residues long: Cytosolic sulfotransferase 14 (347 aa).

87–92 contributes to the 3'-phosphoadenylyl sulfate binding site; it reads KSGTTW. His155 functions as the Proton acceptor in the catalytic mechanism. Residues Arg177, Ser185, Tyr244, and 310–312 each bind 3'-phosphoadenylyl sulfate; that span reads RKG.

This sequence belongs to the sulfotransferase 1 family.

It is found in the cytoplasm. In terms of biological role, sulfotransferase that utilizes 3'-phospho-5'-adenylyl sulfate (PAPS) as sulfonate donor. Not active with 11-hydroxyjasmonate or 12-hydroxyjasmonate. The protein is Cytosolic sulfotransferase 14 (SOT14) of Arabidopsis thaliana (Mouse-ear cress).